A 311-amino-acid polypeptide reads, in one-letter code: Cytosolic Fe-S cluster assembly factor Nubp1 homolog (311 aa).

Residues Cys-9, Cys-23, Cys-26, and Cys-32 each coordinate [4Fe-4S] cluster. An ATP-binding site is contributed by 63 to 70 (GKGGVGKS). [4Fe-4S] cluster-binding residues include Cys-241 and Cys-244.

The protein belongs to the Mrp/NBP35 ATP-binding proteins family. NUBP1/NBP35 subfamily. In terms of assembly, heterotetramer of 2 Nubp1 and 2 Nubp2 chains. [4Fe-4S] cluster serves as cofactor.

The protein localises to the cytoplasm. In terms of biological role, component of the cytosolic iron-sulfur (Fe/S) protein assembly (CIA) machinery. Required for maturation of extramitochondrial Fe-S proteins. The Nubp1-Nubp2 heterotetramer forms a Fe-S scaffold complex, mediating the de novo assembly of an Fe-S cluster and its transfer to target apoproteins. This is Cytosolic Fe-S cluster assembly factor Nubp1 homolog from Drosophila grimshawi (Hawaiian fruit fly).